The chain runs to 219 residues: Deoxyribose-phosphate aldolase (219 aa).

Asp-89 functions as the Proton donor/acceptor in the catalytic mechanism. Lys-151 acts as the Schiff-base intermediate with acetaldehyde in catalysis. The Proton donor/acceptor role is filled by Lys-180.

Belongs to the DeoC/FbaB aldolase family. DeoC type 1 subfamily.

The protein localises to the cytoplasm. The enzyme catalyses 2-deoxy-D-ribose 5-phosphate = D-glyceraldehyde 3-phosphate + acetaldehyde. It participates in carbohydrate degradation; 2-deoxy-D-ribose 1-phosphate degradation; D-glyceraldehyde 3-phosphate and acetaldehyde from 2-deoxy-alpha-D-ribose 1-phosphate: step 2/2. Its function is as follows. Catalyzes a reversible aldol reaction between acetaldehyde and D-glyceraldehyde 3-phosphate to generate 2-deoxy-D-ribose 5-phosphate. This chain is Deoxyribose-phosphate aldolase, found in Coprothermobacter proteolyticus (strain ATCC 35245 / DSM 5265 / OCM 4 / BT).